Consider the following 333-residue polypeptide: HTH-type transcriptional repressor PurR (333 aa).

One can recognise an HTH lacI-type domain in the interval 2 to 56; sequence ATIKDVAKMAGVSTTTVSHVINKTRFVAKETEQQVLQAIKNLNYSPSAVARSLKV. Positions 4-23 form a DNA-binding region, H-T-H motif; it reads IKDVAKMAGVSTTTVSHVIN. The DNA-binding element occupies 48 to 56; it reads SAVARSLKV. Hypoxanthine-binding residues include tyrosine 73, lysine 189, threonine 191, phenylalanine 220, and aspartate 274.

As to quaternary structure, homodimer.

It participates in purine metabolism; purine nucleotide biosynthesis [regulation]. Is the main repressor of the genes involved in the de novo synthesis of purine nucleotides, regulating purB, purC, purEK, purF, purHD, purL, purMN and guaBA expression. PurR is allosterically activated to bind its cognate DNA by binding the purine corepressors, hypoxanthine or guanine, thereby effecting transcription repression. The chain is HTH-type transcriptional repressor PurR from Histophilus somni (strain 2336) (Haemophilus somnus).